Here is a 214-residue protein sequence, read N- to C-terminus: Probable transaldolase (214 aa).

Residue lysine 83 is the Schiff-base intermediate with substrate of the active site.

It belongs to the transaldolase family. Type 3B subfamily.

It is found in the cytoplasm. The enzyme catalyses D-sedoheptulose 7-phosphate + D-glyceraldehyde 3-phosphate = D-erythrose 4-phosphate + beta-D-fructose 6-phosphate. It functions in the pathway carbohydrate degradation; pentose phosphate pathway; D-glyceraldehyde 3-phosphate and beta-D-fructose 6-phosphate from D-ribose 5-phosphate and D-xylulose 5-phosphate (non-oxidative stage): step 2/3. Functionally, transaldolase is important for the balance of metabolites in the pentose-phosphate pathway. The sequence is that of Probable transaldolase (tal) from Streptococcus pyogenes serotype M1.